The primary structure comprises 405 residues: Formate-dependent phosphoribosylglycinamide formyltransferase (405 aa).

N(1)-(5-phospho-beta-D-ribosyl)glycinamide contacts are provided by residues 22 to 23 (EL) and E82. Residues R115, K162, 167 to 172 (SSGKGQ), 202 to 205 (EGFI), and E210 each bind ATP. An ATP-grasp domain is found at 120–320 (RLAAETLGLA…EFELHARAIL (201 aa)). The Mg(2+) site is built by E279 and E291. Residues D298, K367, and 374-375 (RR) contribute to the N(1)-(5-phospho-beta-D-ribosyl)glycinamide site.

Belongs to the PurK/PurT family. Homodimer.

It carries out the reaction N(1)-(5-phospho-beta-D-ribosyl)glycinamide + formate + ATP = N(2)-formyl-N(1)-(5-phospho-beta-D-ribosyl)glycinamide + ADP + phosphate + H(+). Its pathway is purine metabolism; IMP biosynthesis via de novo pathway; N(2)-formyl-N(1)-(5-phospho-D-ribosyl)glycinamide from N(1)-(5-phospho-D-ribosyl)glycinamide (formate route): step 1/1. Its function is as follows. Involved in the de novo purine biosynthesis. Catalyzes the transfer of formate to 5-phospho-ribosyl-glycinamide (GAR), producing 5-phospho-ribosyl-N-formylglycinamide (FGAR). Formate is provided by PurU via hydrolysis of 10-formyl-tetrahydrofolate. The protein is Formate-dependent phosphoribosylglycinamide formyltransferase of Delftia acidovorans (strain DSM 14801 / SPH-1).